Here is a 224-residue protein sequence, read N- to C-terminus: Acyl-protein thioesterase 1 (224 aa).

Active-site charge relay system residues include serine 116, aspartate 170, and histidine 203.

This sequence belongs to the AB hydrolase superfamily. AB hydrolase 2 family.

It localises to the cytoplasm. Its subcellular location is the nucleus. The enzyme catalyses S-hexadecanoyl-L-cysteinyl-[protein] + H2O = L-cysteinyl-[protein] + hexadecanoate + H(+). Hydrolyzes fatty acids from S-acylated cysteine residues in proteins with a strong preference for palmitoylated G-alpha proteins over other acyl substrates. Mediates the deacylation of G-alpha proteins such as GPA1 in vivo, but has weak or no activity toward palmitoylated Ras proteins. Has weak lysophospholipase activity in vitro; however such activity may not exist in vivo. The sequence is that of Acyl-protein thioesterase 1 from Schizosaccharomyces pombe (strain 972 / ATCC 24843) (Fission yeast).